The sequence spans 310 residues: 4-hydroxyproline 2-epimerase (310 aa).

The active-site Proton acceptor is Cys88. Substrate-binding positions include 89–90 (GH), His208, and Asp232. Cys236 functions as the Proton donor in the catalytic mechanism. 237–238 (GT) provides a ligand contact to substrate.

The protein belongs to the proline racemase family.

It carries out the reaction trans-4-hydroxy-L-proline = cis-4-hydroxy-D-proline. Catalyzes the epimerization of trans-4-hydroxy-L-proline (t4LHyp) to cis-4-hydroxy-D-proline (c4DHyp). Is likely involved in a degradation pathway that converts t4LHyp to alpha-ketoglutarate. Displays no proline racemase activity. The protein is 4-hydroxyproline 2-epimerase of Pseudomonas fluorescens (strain ATCC BAA-477 / NRRL B-23932 / Pf-5).